A 249-amino-acid polypeptide reads, in one-letter code: MNRYFIYLAYNGRNYCGWQIQPNGITVQQRIQQCLSILLRKSVTIIGAGRTDAGVHANLMTAHFDWEEILSTTSLTKRLNGILPCDILIYKIIPVKKNAHARFDAISRKYKYYITYQKNPFRNEQLFRLKQPLNKHLMNEASNILSEYSDFTSFCKLHSNTRTNVCRISKAEWNTVQGIDIFTIKADRFLRNMVRSIVGTMIDIGKNKLSITDFRKIIESKNHIMLKSSVPAHALFLTDIEYPNWIFKN.

D52 functions as the Nucleophile in the catalytic mechanism. Y110 serves as a coordination point for substrate.

It belongs to the tRNA pseudouridine synthase TruA family. Homodimer.

The catalysed reaction is uridine(38/39/40) in tRNA = pseudouridine(38/39/40) in tRNA. Formation of pseudouridine at positions 38, 39 and 40 in the anticodon stem and loop of transfer RNAs. This Azobacteroides pseudotrichonymphae genomovar. CFP2 protein is tRNA pseudouridine synthase A.